Here is a 359-residue protein sequence, read N- to C-terminus: NAC transcription factor 47 (359 aa).

Residues 10–186 (LPPGFRFHPT…DWVLCRIYKK (177 aa)) enclose the NAC domain. A DNA-binding region spans residues 112–192 (IGIKKALVFY…IYKKSHASLS (81 aa)). Disordered stretches follow at residues 147–166 (KRIN…FGDR) and 200–226 (TSNQ…LQND). The segment covering 148-165 (RINSSRSGGSEVNNNFGD) has biased composition (polar residues).

It is found in the nucleus. Transcription factor that binds to the promoter of ACO5, an ACC oxidase involved in ethylene biosynthesis. Mediates waterlogging-induced hyponastic leaf movement, and cell expansion in abaxial cells of the basal petiole region, by directly regulating the expression of ACO5. Required for normal seed development and morphology. The chain is NAC transcription factor 47 from Arabidopsis thaliana (Mouse-ear cress).